Consider the following 342-residue polypeptide: Nuclear hormone receptor family member nhr-150 (342 aa).

A DNA-binding region (nuclear receptor) is located at residues 1 to 71 (MCQVCGAAEA…AGMTSKKIQS (71 aa)). Residues 2–22 (CQVCGAAEADLHFGGISCRAC) form an NR C4-type zinc finger. An NR C4-type; degenerate zinc finger spans residues 39–54 (CTCKTRILDSHPCRSC). The 248-residue stretch at 94 to 341 (SARIIPRSSL…GFMEIIRESK (248 aa)) folds into the NR LBD domain.

The protein belongs to the nuclear hormone receptor family.

The protein resides in the nucleus. In terms of biological role, orphan nuclear receptor. This is Nuclear hormone receptor family member nhr-150 (nhr-150) from Caenorhabditis elegans.